Here is a 383-residue protein sequence, read N- to C-terminus: 4-hydroxy-3-methylbut-2-en-1-yl diphosphate synthase (flavodoxin) (383 aa).

[4Fe-4S] cluster is bound by residues C275, C278, C310, and E317.

Belongs to the IspG family. [4Fe-4S] cluster is required as a cofactor.

The catalysed reaction is (2E)-4-hydroxy-3-methylbut-2-enyl diphosphate + oxidized [flavodoxin] + H2O + 2 H(+) = 2-C-methyl-D-erythritol 2,4-cyclic diphosphate + reduced [flavodoxin]. The protein operates within isoprenoid biosynthesis; isopentenyl diphosphate biosynthesis via DXP pathway; isopentenyl diphosphate from 1-deoxy-D-xylulose 5-phosphate: step 5/6. Functionally, converts 2C-methyl-D-erythritol 2,4-cyclodiphosphate (ME-2,4cPP) into 1-hydroxy-2-methyl-2-(E)-butenyl 4-diphosphate. This chain is 4-hydroxy-3-methylbut-2-en-1-yl diphosphate synthase (flavodoxin), found in Dinoroseobacter shibae (strain DSM 16493 / NCIMB 14021 / DFL 12).